The chain runs to 399 residues: Developmentally-regulated G-protein 2 (399 aa).

The OBG-type G domain maps to 63-288; sequence GRVALIGFPS…LLARMWDEMG (226 aa). GTP-binding positions include 69–76, 115–119, and 246–249; these read GFPSVGKS, DLPGI, and NKID. In terms of domain architecture, TGS spans 288-366; sequence GLVRVYSKPQ…EDEDVVQIVK (79 aa). Positions 372–399 are disordered; it reads EGGRGRFKSHSNAPARIADREKKAPLKQ. Positions 388–399 are enriched in basic and acidic residues; that stretch reads IADREKKAPLKQ.

It belongs to the TRAFAC class OBG-HflX-like GTPase superfamily. OBG GTPase family.

It is found in the cytoplasm. Its function is as follows. Binds GDP and GTP, and has low GTPase activity. This Arabidopsis thaliana (Mouse-ear cress) protein is Developmentally-regulated G-protein 2 (DRG2).